The following is a 366-amino-acid chain: Mitochondrial substrate carrier family protein H (366 aa).

The span at 1 to 25 (MLSNSVNNNNNNNNINNSNSNNNDS) shows a compositional bias: low complexity. Residues 1 to 26 (MLSNSVNNNNNNNNINNSNSNNNDSN) are disordered. 3 Solcar repeats span residues 29-121 (KNVK…LKEY), 132-243 (NIYT…LKNK), and 259-360 (SPFF…IKQS). The next 6 helical transmembrane spans lie at 35 to 55 (MVAS…LDVV), 96 to 112 (GVTP…TIYF), 133 to 151 (IYTV…SASV), 175 to 192 (VAMA…IPLS), 262 to 282 (FINF…TTPI), and 340 to 357 (VAKV…FEYI).

Belongs to the mitochondrial carrier (TC 2.A.29) family.

The protein resides in the mitochondrion inner membrane. Its function is as follows. Mitochondrial transporter required for glutathione import into mitochondria. The sequence is that of Mitochondrial substrate carrier family protein H from Dictyostelium discoideum (Social amoeba).